We begin with the raw amino-acid sequence, 342 residues long: Ketol-acid reductoisomerase (NADP(+)) (342 aa).

Positions 2-182 constitute a KARI N-terminal Rossmann domain; that stretch reads AEIYYDNDAD…GGLRAGGIKT (181 aa). NADP(+) is bound by residues 25 to 28, Lys48, Ser51, Ser53, and 83 to 86; these read YGSQ and DQVQ. The active site involves His108. An NADP(+)-binding site is contributed by Gly134. Residues 183-328 enclose the KARI C-terminal knotted domain; it reads TFTEETETDL…RELRKLFAWN (146 aa). Residues Asp191, Glu195, Glu227, and Glu231 each coordinate Mg(2+). Substrate is bound at residue Ser252.

The protein belongs to the ketol-acid reductoisomerase family. The cofactor is Mg(2+).

It carries out the reaction (2R)-2,3-dihydroxy-3-methylbutanoate + NADP(+) = (2S)-2-acetolactate + NADPH + H(+). The catalysed reaction is (2R,3R)-2,3-dihydroxy-3-methylpentanoate + NADP(+) = (S)-2-ethyl-2-hydroxy-3-oxobutanoate + NADPH + H(+). It functions in the pathway amino-acid biosynthesis; L-isoleucine biosynthesis; L-isoleucine from 2-oxobutanoate: step 2/4. It participates in amino-acid biosynthesis; L-valine biosynthesis; L-valine from pyruvate: step 2/4. Involved in the biosynthesis of branched-chain amino acids (BCAA). Catalyzes an alkyl-migration followed by a ketol-acid reduction of (S)-2-acetolactate (S2AL) to yield (R)-2,3-dihydroxy-isovalerate. In the isomerase reaction, S2AL is rearranged via a Mg-dependent methyl migration to produce 3-hydroxy-3-methyl-2-ketobutyrate (HMKB). In the reductase reaction, this 2-ketoacid undergoes a metal-dependent reduction by NADPH to yield (R)-2,3-dihydroxy-isovalerate. The chain is Ketol-acid reductoisomerase (NADP(+)) from Leifsonia xyli subsp. xyli (strain CTCB07).